The sequence spans 222 residues: Endonuclease V (222 aa).

Mg(2+) is bound by residues aspartate 43 and aspartate 109.

Belongs to the endonuclease V family. Mg(2+) serves as cofactor.

The protein resides in the cytoplasm. The enzyme catalyses Endonucleolytic cleavage at apurinic or apyrimidinic sites to products with a 5'-phosphate.. Functionally, DNA repair enzyme involved in the repair of deaminated bases. Selectively cleaves double-stranded DNA at the second phosphodiester bond 3' to a deoxyinosine leaving behind the intact lesion on the nicked DNA. The protein is Endonuclease V of Roseiflexus sp. (strain RS-1).